The chain runs to 326 residues: uncharacterized protein (326 aa).

To B.subtilis XkdQ.

This is an uncharacterized protein from Bacillus subtilis (strain 168).